The following is a 197-amino-acid chain: Putative rho GDP-dissociation inhibitor 1 (197 aa).

Belongs to the Rho GDI family. In terms of assembly, interacts with rac1A, rac1B, rac1C, racB, raCC and RacE.

It localises to the cytoplasm. Regulates the GDP/GTP exchange reaction of the Rho proteins by inhibiting the dissociation of GDP from them, and the subsequent binding of GTP to them. Regulates the Rac-dependent signaling pathways controlling cytokinesis, actin reorganization and the contractile vacuole. Required for efficient accumulation of cap at the cell cortex. This is Putative rho GDP-dissociation inhibitor 1 (rdiA) from Dictyostelium discoideum (Social amoeba).